A 329-amino-acid chain; its full sequence is UDP-3-O-acylglucosamine N-acyltransferase (329 aa).

The active-site Proton acceptor is the His-224.

The protein belongs to the transferase hexapeptide repeat family. LpxD subfamily. Homotrimer.

It catalyses the reaction a UDP-3-O-[(3R)-3-hydroxyacyl]-alpha-D-glucosamine + a (3R)-hydroxyacyl-[ACP] = a UDP-2-N,3-O-bis[(3R)-3-hydroxyacyl]-alpha-D-glucosamine + holo-[ACP] + H(+). It functions in the pathway bacterial outer membrane biogenesis; LPS lipid A biosynthesis. Its function is as follows. Catalyzes the N-acylation of UDP-3-O-acylglucosamine using 3-hydroxyacyl-ACP as the acyl donor. Is involved in the biosynthesis of lipid A, a phosphorylated glycolipid that anchors the lipopolysaccharide to the outer membrane of the cell. The protein is UDP-3-O-acylglucosamine N-acyltransferase of Albidiferax ferrireducens (strain ATCC BAA-621 / DSM 15236 / T118) (Rhodoferax ferrireducens).